A 173-amino-acid polypeptide reads, in one-letter code: Photosystem I reaction center subunit XI (173 aa).

The next 2 membrane-spanning stretches (helical) occupy residues 92–112 (LAGL…LSLY) and 148–168 (LIGG…LGII).

Belongs to the PsaL family.

It is found in the cellular thylakoid membrane. This is Photosystem I reaction center subunit XI from Nostoc punctiforme (strain ATCC 29133 / PCC 73102).